The primary structure comprises 362 residues: Atypical chemokine receptor 3 (362 aa).

Residues Met-1–Leu-47 are Extracellular-facing. Residues Asn-13 and Asn-22 are each glycosylated (N-linked (GlcNAc...) asparagine). A helical transmembrane segment spans residues Ser-48–Val-68. Over Asn-69 to Cys-81 the chain is Cytoplasmic. Residues Tyr-82–Val-102 traverse the membrane as a helical segment. The Extracellular portion of the chain corresponds to Ser-103–Lys-118. Cysteines 117 and 196 form a disulfide. The chain crosses the membrane as a helical span at residues Ile-119–Ser-139. At Val-140–Arg-162 the chain is on the cytoplasmic side. Residues Val-163–Leu-183 traverse the membrane as a helical segment. At Lys-184–Glu-213 the chain is on the extracellular side. Residues Leu-214–Leu-234 traverse the membrane as a helical segment. Residues Leu-235–Lys-252 are Cytoplasmic-facing. A helical membrane pass occupies residues Ile-253 to Leu-273. Residues Leu-274–Ala-296 lie on the Extracellular side of the membrane. The helical transmembrane segment at Leu-297–Asn-319 threads the bilayer. Topologically, residues Arg-320–Lys-362 are cytoplasmic. A C-terminal cytoplasmic tail region spans residues Tyr-324–Lys-362. A phosphoserine mark is found at Ser-347, Ser-350, and Ser-355.

It belongs to the G-protein coupled receptor 1 family. Atypical chemokine receptor subfamily. As to quaternary structure, homodimer. Can form heterodimers with CXCR4; heterodimerization may regulate CXCR4 signaling activity. Interacts with ARRB1 and ARRB2. The Ser/Thr residues in the C-terminal cytoplasmic tail may be phosphorylated. Post-translationally, ubiquitinated at the Lys residues in its C-terminal cytoplasmic tail and is essential for correct trafficking from and to the cell membrane. Deubiquitinated by CXCL12-stimulation in a reversible manner. In terms of tissue distribution, not detected in blood, liver, lung and heart, but high expression detected in several tumor cell lines (at protein level). Expressed in heart, spleen, kidney, lung, ovary, brain, testis, astrocytes, neutrophils and B-lymphocytes.

It localises to the cell membrane. It is found in the early endosome. The protein localises to the recycling endosome. In terms of biological role, atypical chemokine receptor that controls chemokine levels and localization via high-affinity chemokine binding that is uncoupled from classic ligand-driven signal transduction cascades, resulting instead in chemokine sequestration, degradation, or transcytosis. Also known as interceptor (internalizing receptor) or chemokine-scavenging receptor or chemokine decoy receptor. Acts as a receptor for chemokines CXCL11 and CXCL12/SDF1. Chemokine binding does not activate G-protein-mediated signal transduction but instead induces beta-arrestin recruitment, leading to ligand internalization and activation of MAPK signaling pathway. Required for regulation of CXCR4 protein levels in migrating interneurons, thereby adapting their chemokine responsiveness. In glioma cells, transduces signals via MEK/ERK pathway, mediating resistance to apoptosis. Promotes cell growth and survival. Not involved in cell migration, adhesion or proliferation of normal hematopoietic progenitors but activated by CXCL11 in malignant hemapoietic cells, leading to phosphorylation of ERK1/2 (MAPK3/MAPK1) and enhanced cell adhesion and migration. Plays a regulatory role in CXCR4-mediated activation of cell surface integrins by CXCL12. Required for heart valve development. Regulates axon guidance in the oculomotor system through the regulation of CXCL12 levels. The chain is Atypical chemokine receptor 3 from Mus musculus (Mouse).